The chain runs to 325 residues: Glutarate 2-hydroxylase (325 aa).

Fe cation is bound by residues H160, D162, and H292.

The protein belongs to the glutarate hydroxylase family. Homotetramer. The cofactor is Fe(2+).

The catalysed reaction is glutarate + 2-oxoglutarate + O2 = (S)-2-hydroxyglutarate + succinate + CO2. It participates in amino-acid degradation. Its function is as follows. Acts as an alpha-ketoglutarate-dependent dioxygenase catalyzing hydroxylation of glutarate (GA) to L-2-hydroxyglutarate (L2HG). Functions in a L-lysine degradation pathway that proceeds via cadaverine, glutarate and L-2-hydroxyglutarate. The protein is Glutarate 2-hydroxylase of Salmonella typhimurium (strain SL1344).